The following is a 25-amino-acid chain: Ocellatin-K1 (25 aa).

Isoleucine 25 is modified (isoleucine amide).

As to expression, expressed by the skin glands.

It is found in the secreted. In terms of biological role, has hemolytic and antibacterial activity. This Leptodactylus knudseni (Knudsen's thin-toed frog) protein is Ocellatin-K1.